Reading from the N-terminus, the 167-residue chain is Phosphopantetheine adenylyltransferase (167 aa).

S11 contacts substrate. Residues 11–12 and H19 contribute to the ATP site; that span reads SF. 3 residues coordinate substrate: K43, T76, and R90. ATP contacts are provided by residues 91–93, E101, and 126–132; these read GIR and YDALSST.

The protein belongs to the bacterial CoaD family. As to quaternary structure, homohexamer. Mg(2+) is required as a cofactor.

The protein resides in the cytoplasm. It catalyses the reaction (R)-4'-phosphopantetheine + ATP + H(+) = 3'-dephospho-CoA + diphosphate. Its pathway is cofactor biosynthesis; coenzyme A biosynthesis; CoA from (R)-pantothenate: step 4/5. Reversibly transfers an adenylyl group from ATP to 4'-phosphopantetheine, yielding dephospho-CoA (dPCoA) and pyrophosphate. The protein is Phosphopantetheine adenylyltransferase of Lacticaseibacillus casei (strain BL23) (Lactobacillus casei).